We begin with the raw amino-acid sequence, 1516 residues long: Receptor-type tyrosine-protein phosphatase S (1516 aa).

An N-terminal signal peptide occupies residues 1-28 (MRILPSPGMPALLSLVSLLSVLLMGCVA). Residues 29–854 (ESPPVFIKKP…PQPIIDGEEG (826 aa)) are Extracellular-facing. 3 Ig-like C2-type domains span residues 32–122 (PVFI…AKLT), 134–223 (PNID…ANLY), and 235–317 (PRFS…AQIT). Disulfide bonds link cysteine 53/cysteine 106 and cysteine 155/cysteine 206. Residues 67 to 71 (KKGKK) are important for binding to glycosaminoglycan chains. N-linked (GlcNAc...) asparagine glycans are attached at residues asparagine 253 and asparagine 298. Residues cysteine 256 and cysteine 301 are joined by a disulfide bond. Fibronectin type-III domains are found at residues 324–414 (APGT…TGEQ), 419–513 (APRN…TQQG), 517–606 (QPMN…TLQS), and 608–692 (LPKN…TAAN). The chain crosses the membrane as a helical span at residues 855 to 875 (LIWVIGPVLAVVFIICIVIAI). Residues 876–1516 (LLYKNKRKDS…YLGSFDHYAT (641 aa)) are Cytoplasmic-facing. Tyrosine-protein phosphatase domains lie at 961–1216 (LSQE…LLEA) and 1248–1507 (MELE…ALEY). Active-site phosphocysteine intermediate residues include cysteine 1157 and cysteine 1448.

The protein belongs to the protein-tyrosine phosphatase family. Receptor class 2A subfamily. Homodimer. Binding to large heparan sulfate proteoglycan structures promotes oligomerization. Binding to chondroitin sulfate proteoglycan does not lead to oligomerization. Interacts (via Ig-like domains) with NTRK1 and NTRK3, but does not form detectable complexes with NTRK2. Interacts (via extracellular domain) with the heparan sulfate proteoglycans AGRN and COL18A1. In terms of processing, a cleavage occurs, separating the extracellular domain from the transmembrane segment. This process called 'ectodomain shedding' is thought to be involved in receptor desensitization, signal transduction and/or membrane localization. Detected in embryonic brain, dorsal root ganglion and spinal cord. Detected in embryonic retina (at protein level). Detected in embryonic brain, spinal cord, dorsal root ganglion, trigeminal ganglion, ganglia associated with the precardinal vein and vagus nerve, the inner and outer nuclear layer of the retina, limb, breast muscle, heart, gut and lung.

The protein resides in the cell membrane. Its subcellular location is the cell projection. It is found in the axon. It localises to the perikaryon. The protein localises to the cytoplasmic vesicle. The protein resides in the secretory vesicle. Its subcellular location is the synaptic vesicle membrane. It is found in the synapse. It localises to the synaptosome. The protein localises to the postsynaptic density. The protein resides in the neuron projection. Its subcellular location is the growth cone. The enzyme catalyses O-phospho-L-tyrosyl-[protein] + H2O = L-tyrosyl-[protein] + phosphate. Functionally, cell surface receptor that binds to glycosaminoglycans, including chondroitin sulfate proteoglycans and heparan sulfate proteoglycans. Binding to chondroitin sulfate and heparan sulfate proteoglycans has opposite effects on PTPRS oligomerization and regulation of neurite outgrowth. Contributes to the inhibition of neurite and axonal outgrowth by chondroitin sulfate proteoglycans, also after nerve transection. Plays a role in stimulating neurite outgrowth in response to the heparan sulfate proteoglycan GPC2. Required for normal brain development, especially for normal development of the pituitary gland and the olfactory bulb. Functions as tyrosine phosphatase. Mediates dephosphorylation of NTRK1, NTRK2 and NTRK3. Plays a role in down-regulation of signaling cascades that lead to the activation of Akt and MAP kinases. Down-regulates TLR9-mediated activation of NF-kappa-B, as well as production of TNF, interferon alpha and interferon beta. This is Receptor-type tyrosine-protein phosphatase S (PTPRS) from Gallus gallus (Chicken).